The primary structure comprises 2431 residues: Nucleoprotein TPR (2431 aa).

The disordered stretch occupies residues 1–48; sequence MTSGGSASRSGHRGVPMTSRGFDGSRRGSLRRAGARETASEAADGAAP. The tract at residues 77-87 is sufficient for interaction with TPR; it reads AVLQQVLERPE. The interval 88 to 191 is necessary for interaction with HSF1; that stretch reads LNKLPKSTQN…GIQSQFTRAK (104 aa). The stretch at 98–444 forms a coiled coil; sequence KLEKFLAEQQ…SATKRKGAIL (347 aa). 3 positions are modified to N6-acetyllysine: Lys-326, Lys-386, and Lys-419. Residue Ser-453 is modified to Phosphoserine. Positions 486–678 form a coiled coil; sequence EKQENKRINK…ESRQHQMQLV (193 aa). N6-acetyllysine is present on residues Lys-502, Lys-531, and Lys-551. Residues 511–587 form a necessary for association to the NPC region; sequence LKRQREEYER…LMELEEARGN (77 aa). Phosphoserine is present on residues Ser-596, Ser-597, and Ser-706. Residues 736–1246 are a coiled coil; sequence STEAIEAKAA…IEKLSDKVVT (511 aa). Residues Lys-787, Lys-797, Lys-822, and Lys-829 each carry the N6-acetyllysine modification. Polar residues predominate over residues 989-998; sequence LASQSTQRTG. Residues 989–1011 are disordered; sequence LASQSTQRTGKGQPGDRDDVDDL. Positions 1002–1011 are enriched in basic and acidic residues; the sequence is PGDRDDVDDL. Ser-1259 is subject to Phosphoserine. Coiled coils occupy residues 1289–1494 and 1547–1700; these read EVAQ…LDAK and VQEM…QRDE. Residues 1292-1394 form a necessary for interaction with HSF1 region; that stretch reads QVESLRYRQR…NAELSEKSGM (103 aa). The segment covering 1689–1701 has biased composition (basic and acidic residues); the sequence is EHQERHLEQRDEP. Positions 1689-1744 are disordered; that stretch reads EHQERHLEQRDEPQEPTNKAPEQQRQITLKTTPASGERGIASTSDPPTANIKPTPV. Polar residues predominate over residues 1703–1722; sequence EPTNKAPEQQRQITLKTTPA. Position 1760 is an N6-acetyllysine (Lys-1760). Thr-1762 is subject to Phosphothreonine. Polar residues predominate over residues 1873–1898; the sequence is SSPVERPSTSTAVFGTVSATPSSSLP. The disordered stretch occupies residues 1873–2193; it reads SSPVERPSTS…TPGIGGMQQH (321 aa). Positions 1882-1937 are sufficient and essential for mediating its nuclear import; sequence STAVFGTVSATPSSSLPKRTREEEEDSTMEAGDQVSEDTVEMPLPKKLKMVTPVGT. Positions 1937–1951 are enriched in acidic residues; that stretch reads TEEEVMAEESTDGEA. Residues 1954 to 1963 are compositionally biased toward polar residues; it reads QAYNQDSQDS. Ser-1963 carries the post-translational modification Phosphoserine. The segment covering 1994 to 2005 has biased composition (low complexity); it reads QSDQQTTSSQDG. Acidic residues-rich tracts occupy residues 2016 to 2057 and 2067 to 2088; these read DSDD…EDSN and DGYE…ETEE. Positions 2100–2132 are enriched in polar residues; it reads ADSQNSGEGNTSAAESSFSQEVAREQQPTSASE. A phosphoserine mark is found at Ser-2102, Ser-2105, Ser-2116, Ser-2118, and Ser-2141. 2 positions are modified to omega-N-methylarginine: Arg-2174 and Arg-2179. Phosphothreonine occurs at positions 2184 and 2205. Ser-2223 carries the post-translational modification Phosphoserine. An Omega-N-methylarginine modification is found at Arg-2231. The span at 2295-2312 shows a compositional bias: polar residues; sequence ESTTSDASEHASQSVPMV. The segment at 2295-2431 is disordered; sequence ESTTSDASEH…RGGINRGNIN (137 aa). A compositionally biased stretch (low complexity) spans 2313–2325; sequence TTSTGTLSTTNET. Residues 2327 to 2340 are compositionally biased toward acidic residues; sequence AGDDGDEVFVEAES. Positions 2341–2351 are enriched in low complexity; it reads EGISSEAGLEI. The span at 2353–2367 shows a compositional bias: acidic residues; sequence SQQEEEPVQASDESD. Residues 2368–2388 are compositionally biased toward low complexity; it reads LPSTSQDPPSSSSVDTSSSQP. 3 positions are modified to asymmetric dimethylarginine: Arg-2411, Arg-2413, and Arg-2422. Residues 2420-2431 are compositionally biased toward gly residues; that stretch reads GGRGGINRGNIN.

This sequence belongs to the TPR family. In terms of assembly, homodimer. Part of the nuclear pore complex (NPC). Associates with the XPO1/CRM1-mediated nuclear export complex, the Importin alpha/Importin beta receptor and the dynein 1 complex. Interacts (via C-terminal domain) with the KPNB1; the interaction occurs in a RanGTP-dependent manner. Interacts (via C-terminal region and phosphorylated form) with MAPK1/ERK2 (via phosphorylated form); the interaction requires dimerization of MAPK1/ERK2 and increases following EGF stimulation. Interacts with MAPK3/ERK1; the interaction increases following EGF stimulation. Interacts (via coiled coil region) with NUP153; the interaction is direct. Interacts with HSF1; the interaction increases in a stress-responsive manner and stimulates export of stress-induced HSP70 mRNA. Interacts with huntingtin/HTT; the interaction is inhibited by aggregated huntingtin/HTT forms with expanded polyglutamine stretch. Interacts with MAD1L1 (via N-terminal region), MAD2L1, and TTK; the interactions occurs in a microtubule-independent manner. Interacts (via middle region) with DYNLL1. Interacts with DCTN1, dynein, NUP153 and tubulin. Interacts with MTA1. Interacts with IFI204 (via C-terminal region). Interacts with IFI203. Interacts with ZC3HC1; this interaction mediates ZC3HC1 nuclear envelopes (NE)-association but also required for proper positioning of a substantial amount of TPR at the nuclear basket (NB). Post-translationally, phosphorylated. Phosphorylation occurs on serine and threonine residues (comprised in the C-terminal region) by MAPK1/ERK2 and stabilizes the interaction between these two proteins. As to expression, expressed in the heart, liver, kidney, spleen, lung and skeletal muscles.

The protein resides in the nucleus. The protein localises to the nucleus membrane. It localises to the nucleus envelope. It is found in the nuclear pore complex. Its subcellular location is the cytoplasm. The protein resides in the cytoskeleton. The protein localises to the spindle. It localises to the chromosome. It is found in the centromere. Its subcellular location is the kinetochore. Component of the nuclear pore complex (NPC), a complex required for the trafficking across the nuclear envelope. Functions as a scaffolding element in the nuclear phase of the NPC essential for normal nucleocytoplasmic transport of proteins and mRNAs, plays a role in the establishment of nuclear-peripheral chromatin compartmentalization in interphase, and in the mitotic spindle checkpoint signaling during mitosis. Involved in the quality control and retention of unspliced mRNAs in the nucleus; in association with NUP153, regulates the nuclear export of unspliced mRNA species bearing constitutive transport element (CTE) in a NXF1- and KHDRBS1-independent manner. Negatively regulates both the association of CTE-containing mRNA with large polyribosomes and translation initiation. Does not play any role in Rev response element (RRE)-mediated export of unspliced mRNAs. Implicated in nuclear export of mRNAs transcribed from heat shock gene promoters; associates both with chromatin in the HSP70 promoter and with mRNAs transcribed from this promoter under stress-induced conditions. Plays a limited role in the regulation of nuclear protein export. Modulates the nucleocytoplasmic transport of activated MAPK1/ERK2 and huntingtin/HTT and may serve as a docking site for the XPO1/CRM1-mediated nuclear export complex. Also plays a role as a structural and functional element of the perinuclear chromatin distribution; involved in the formation and/or maintenance of NPC-associated perinuclear heterochromatin exclusion zones (HEZs). Finally, acts as a spatial regulator of the spindle-assembly checkpoint (SAC) response ensuring a timely and effective recruitment of spindle checkpoint proteins like MAD1L1 and MAD2L1 to unattached kinetochore during the metaphase-anaphase transition before chromosome congression. Its N-terminus is involved in activation of oncogenic kinases. This Mus musculus (Mouse) protein is Nucleoprotein TPR.